The sequence spans 241 residues: Tubulin-like protein alpha-4B (241 aa).

Over residues 1-10 the composition is skewed to basic and acidic residues; the sequence is MRHQQTERQD. The segment at 1–20 is disordered; it reads MRHQQTERQDPSQPLSRQHG. Residue D10 participates in GTP binding. D10 lines the Mg(2+) pocket. Polar residues predominate over residues 11-20; that stretch reads PSQPLSRQHG. The GTP site is built by S79, G83, T84, T118, N145, and N167. Residue E193 is part of the active site.

This sequence belongs to the tubulin family. The cofactor is Mg(2+). Post-translationally, some glutamate residues at the C-terminus are polyglutamylated, resulting in polyglutamate chains on the gamma-carboxyl group. Polyglutamylation plays a key role in microtubule severing by spastin (SPAST). SPAST preferentially recognizes and acts on microtubules decorated with short polyglutamate tails: severing activity by SPAST increases as the number of glutamates per tubulin rises from one to eight, but decreases beyond this glutamylation threshold. Glutamylation is also involved in cilia motility. In terms of processing, some glutamate residues at the C-terminus are monoglycylated but not polyglycylated due to the absence of functional TTLL10 in human. Monoglycylation is mainly limited to tubulin incorporated into cilia and flagella axonemes, which is required for their stability and maintenance. Flagella glycylation controls sperm motility. Both polyglutamylation and monoglycylation can coexist on the same protein on adjacent residues, and lowering glycylation levels increases polyglutamylation, and reciprocally.

The protein resides in the cytoplasm. Its subcellular location is the cytoskeleton. It carries out the reaction GTP + H2O = GDP + phosphate + H(+). In terms of biological role, tubulin is the major constituent of microtubules, a cylinder consisting of laterally associated linear protofilaments composed ofalpha- and beta-tubulin heterodimers. The polypeptide is Tubulin-like protein alpha-4B (TUBA4B) (Homo sapiens (Human)).